The primary structure comprises 364 residues: Fructose-1,6-bisphosphatase class 1 1 (364 aa).

4 residues coordinate Mg(2+): Glu-99, Asp-121, Leu-123, and Asp-124. Substrate is bound by residues 124–127 (DGSS) and Asn-220. Position 292 (Glu-292) interacts with Mg(2+).

It belongs to the FBPase class 1 family. As to quaternary structure, homotetramer. Requires Mg(2+) as cofactor.

Its subcellular location is the cytoplasm. It catalyses the reaction beta-D-fructose 1,6-bisphosphate + H2O = beta-D-fructose 6-phosphate + phosphate. It participates in carbohydrate biosynthesis; gluconeogenesis. The protein is Fructose-1,6-bisphosphatase class 1 1 of Albidiferax ferrireducens (strain ATCC BAA-621 / DSM 15236 / T118) (Rhodoferax ferrireducens).